Reading from the N-terminus, the 309-residue chain is Protein FdhE homolog (309 aa).

It belongs to the FdhE family.

Its subcellular location is the cytoplasm. In terms of biological role, necessary for formate dehydrogenase activity. In Klebsiella pneumoniae (strain 342), this protein is Protein FdhE homolog.